Consider the following 427-residue polypeptide: Methylthioribose kinase 2 (427 aa).

Residues D49–N53, K68, and R122–I124 contribute to the ATP site. N51 contacts substrate. Residue D243 participates in substrate binding. Residue D260–E262 coordinates ATP. R370 is a binding site for substrate.

It belongs to the methylthioribose kinase family. As to quaternary structure, homodimer.

The catalysed reaction is 5-(methylsulfanyl)-D-ribose + ATP = 5-(methylsulfanyl)-alpha-D-ribose 1-phosphate + ADP + H(+). It functions in the pathway amino-acid biosynthesis; L-methionine biosynthesis via salvage pathway; S-methyl-5-thio-alpha-D-ribose 1-phosphate from S-methyl-5'-thioadenosine (hydrolase route): step 2/2. Functionally, catalyzes the phosphorylation of methylthioribose into methylthioribose-1-phosphate. The polypeptide is Methylthioribose kinase 2 (MTK2) (Oryza sativa subsp. japonica (Rice)).